Reading from the N-terminus, the 394-residue chain is Elongation factor Tu 2 (394 aa).

One can recognise a tr-type G domain in the interval 10 to 204 (KPHVNVGTIG…ALDSYIPEPE (195 aa)). The interval 19–26 (GHVDHGKT) is G1. 19–26 (GHVDHGKT) is a GTP binding site. Residue threonine 26 coordinates Mg(2+). Positions 60–64 (GITIN) are G2. The segment at 81–84 (DCPG) is G3. GTP-binding positions include 81–85 (DCPGH) and 136–139 (NKCD). The G4 stretch occupies residues 136-139 (NKCD). Residues 174–176 (SAL) form a G5 region.

This sequence belongs to the TRAFAC class translation factor GTPase superfamily. Classic translation factor GTPase family. EF-Tu/EF-1A subfamily. Monomer.

It localises to the cytoplasm. It catalyses the reaction GTP + H2O = GDP + phosphate + H(+). Functionally, GTP hydrolase that promotes the GTP-dependent binding of aminoacyl-tRNA to the A-site of ribosomes during protein biosynthesis. The chain is Elongation factor Tu 2 from Shewanella loihica (strain ATCC BAA-1088 / PV-4).